Reading from the N-terminus, the 136-residue chain is Nucleoside diphosphate kinase (136 aa).

ATP-binding residues include lysine 10, phenylalanine 58, arginine 86, threonine 92, arginine 104, and asparagine 114. Catalysis depends on histidine 117, which acts as the Pros-phosphohistidine intermediate.

It belongs to the NDK family. Homotetramer. Requires Mg(2+) as cofactor.

It is found in the cytoplasm. The enzyme catalyses a 2'-deoxyribonucleoside 5'-diphosphate + ATP = a 2'-deoxyribonucleoside 5'-triphosphate + ADP. It catalyses the reaction a ribonucleoside 5'-diphosphate + ATP = a ribonucleoside 5'-triphosphate + ADP. In terms of biological role, major role in the synthesis of nucleoside triphosphates other than ATP. The ATP gamma phosphate is transferred to the NDP beta phosphate via a ping-pong mechanism, using a phosphorylated active-site intermediate. The protein is Nucleoside diphosphate kinase of Mycobacteroides abscessus (strain ATCC 19977 / DSM 44196 / CCUG 20993 / CIP 104536 / JCM 13569 / NCTC 13031 / TMC 1543 / L948) (Mycobacterium abscessus).